The sequence spans 436 residues: MAKIVKVIGREIIDSRGNPTVEAEVHLEGGFVGLAAAPSGASTGSREALELRDGDKSRFLGKGVLKAVSAVNNEIAQAILGKDGSAQTEIDQIMIDLDGTDNKSKFGANAILAVSLATAKAAAASKGLPLYAYIAELNGTPGVYSMPLPMMNIINGGEHADNNVDIQEFMIQPVGASTLKEALRIGAEVFHNLAKVLKSKGLNTAVGDEGGFAPNLASNADALACIKEAVEKAGYVLGKDVTLAMDCASSEFYNKENGLYEMKGEGKSFTSQEFTHYLEGLCNEYPIKSIEDGQDESDWEGFAYQTKVLGGKIQLVGDDLFVTNTKILKEGIEKGIANSILIKFNQIGSLTETLAAIKMAKDAGYTAVISHRSGETEDATIADLAVGTAAGQIKTGSMSRSDRVAKYNQLIRIEEALAAAGTPAPFNGLKEVKGQA.

(2R)-2-phosphoglycerate is bound at residue Q167. Residue E209 is the Proton donor of the active site. Residues D246, E291, and D318 each coordinate Mg(2+). Residues K343, R372, S373, and K394 each contribute to the (2R)-2-phosphoglycerate site. K343 (proton acceptor) is an active-site residue.

The protein belongs to the enolase family. Component of the RNA degradosome, a multiprotein complex involved in RNA processing and mRNA degradation. Mg(2+) serves as cofactor.

The protein resides in the cytoplasm. Its subcellular location is the secreted. It is found in the cell surface. It carries out the reaction (2R)-2-phosphoglycerate = phosphoenolpyruvate + H2O. Its pathway is carbohydrate degradation; glycolysis; pyruvate from D-glyceraldehyde 3-phosphate: step 4/5. In terms of biological role, catalyzes the reversible conversion of 2-phosphoglycerate (2-PG) into phosphoenolpyruvate (PEP). It is essential for the degradation of carbohydrates via glycolysis. This is Enolase from Actinobacillus pleuropneumoniae serotype 3 (strain JL03).